Here is a 398-residue protein sequence, read N- to C-terminus: LIM domain-binding protein 2 (398 aa).

2 disordered regions span residues 245–280 (PPAEPTRQTTTKRRKRKNSTNNASNSNAGNNATSAY) and 354–398 (DAAN…QASQ). The segment covering 263–279 (STNNASNSNAGNNATSA) has biased composition (low complexity). The region spanning 323–362 (DVMVVGEPTLMGGEFGDEDERLITRLENTQYDAANGMDDE) is the LIM interaction domain (LID) domain.

Belongs to the LDB family. Expressed in adult brain, lung, spleen and kidney. Isoform b is generally expressed at a higher level than isoform a.

Its subcellular location is the nucleus. Binds to the LIM domain of a wide variety of LIM domain-containing transcription factors. The polypeptide is LIM domain-binding protein 2 (Xenopus laevis (African clawed frog)).